The primary structure comprises 212 residues: External core antigen (212 aa).

Residues 1–19 (MQLFHLCLIISCSCPTVQA) form the signal peptide. The interval 25–27 (GWL) is HBEAG. The segment at 179 to 212 (RQRGRTIRRRTPSPRRRRSQSPRRRRSQSRESQC) is disordered. The span at 180 to 205 (QRGRTIRRRTPSPRRRRSQSPRRRRS) shows a compositional bias: basic residues. The stretch at 184–190 (TIRRRTP) is one 1; half-length repeat. Positions 184-206 (TIRRRTPSPRRRRSQSPRRRRSQ) are 3 X 8 AA repeats of S-P-R-R-R-R-S-Q. A propeptide spanning residues 184–212 (TIRRRTPSPRRRRSQSPRRRRSQSRESQC) is cleaved from the precursor. 2 repeat units span residues 191 to 198 (SPRRRRSQ) and 199 to 206 (SPRRRRSQ).

Belongs to the orthohepadnavirus precore antigen family. In terms of assembly, homodimerizes. Phosphorylated. In terms of processing, cleaved by host furin.

The protein localises to the secreted. It is found in the host nucleus. In terms of biological role, may regulate immune response to the intracellular capsid in acting as a T-cell tolerogen, by having an immunoregulatory effect which prevents destruction of infected cells by cytotoxic T-cells. This immune regulation may predispose to chronicity during perinatal infections and prevent severe liver injury during adult infections. The chain is External core antigen from Hepatitis B virus genotype D subtype ayw (isolate Australia/AustKW/1991) (HBV-D).